The sequence spans 129 residues: Protein RALF-like 34 (129 aa).

Residues 1–23 (MAASSLNLLLILSLLTFISLQRS) form the signal peptide. A propeptide spans 24–76 (ESLSDNPSLTLLPDGFDWPISHSDEFDIIDGEESFEVTEEDDGVTDRRSLYWR) (removed in mature form). Disulfide bonds link Cys94-Cys107 and Cys121-Cys127.

The protein belongs to the plant rapid alkalinization factor (RALF) family. In terms of processing, proteolytically cleaved, probably by S1P, a subtilisin-like serine protease (subtilase). As to expression, expressed in roots, stems and leaves.

Its subcellular location is the secreted. Functionally, cell signaling peptide that may regulate plant stress, growth, and development. Mediates a rapid alkalinization of extracellular space by mediating a transient increase in the cytoplasmic Ca(2+) concentration leading to a calcium-dependent signaling events through a cell surface receptor and a concomitant activation of some intracellular mitogen-activated protein kinases. The protein is Protein RALF-like 34 (RALFL34) of Arabidopsis thaliana (Mouse-ear cress).